The chain runs to 702 residues: Polyribonucleotide nucleotidyltransferase (702 aa).

D487 and D493 together coordinate Mg(2+). The KH domain maps to 554–613; that stretch reads PRLLTIKIHPDKIREVIGKGGSTIQAITKETGTQIDIQDDGTIVIASVNAIAAQAAKARI. The S1 motif domain maps to 623–691; that stretch reads GRIYEGKVAK…KQGRIRLSMK (69 aa).

This sequence belongs to the polyribonucleotide nucleotidyltransferase family. Component of the RNA degradosome, which is a multiprotein complex involved in RNA processing and mRNA degradation. Requires Mg(2+) as cofactor.

It localises to the cytoplasm. The enzyme catalyses RNA(n+1) + phosphate = RNA(n) + a ribonucleoside 5'-diphosphate. Its function is as follows. Involved in mRNA degradation. Catalyzes the phosphorolysis of single-stranded polyribonucleotides processively in the 3'- to 5'-direction. This chain is Polyribonucleotide nucleotidyltransferase, found in Stenotrophomonas maltophilia (strain K279a).